The primary structure comprises 325 residues: LIM and senescent cell antigen-like-containing domain protein 1 (325 aa).

Ala2 carries the N-acetylalanine modification. 5 consecutive LIM zinc-binding domains span residues 10–62 (CERC…CEHD), 71–121 (CHQC…CRPC), 135–184 (CQKC…CLPC), 193–243 (CGAC…CETH), and 252–303 (CFHC…CKKC).

As to quaternary structure, component of the heterotrimeric IPP (ILK-PINCH-PARVIN) complex composed of ILK, LIMS1/PINCH and PARVA; the complex binds to F-actin via the C-terminal tail of LIMS1 and the N-terminal region of PARVA, promoting F-actin filament bundling. Formation of the IPP complex is dependent on protein kinase C and precedes integrin-mediated cell adhesion and spreading. Competes with LIMS2 for interaction with ILK. Interacts (via LIM zinc-binding 5) with TGFB1I1. Interacts with SH3/SH2 adapter NCK2, thereby linking the complex to cell surface receptors. Expressed in most tissues except in the brain.

It localises to the cell junction. The protein resides in the focal adhesion. It is found in the cell membrane. In terms of biological role, within the IPP (ILK-PINCH-PARVIN) complex, binds to F-actin, promoting F-actin bundling, a process required to generate force for actin cytoskeleton reorganization and subsequent dynamic cell adhesion events such as cell spreading and migration. In Homo sapiens (Human), this protein is LIM and senescent cell antigen-like-containing domain protein 1 (LIMS1).